Consider the following 263-residue polypeptide: Type III pantothenate kinase (263 aa).

14-21 is a binding site for ATP; that stretch reads DIGNTSVN. Residue 115–118 participates in substrate binding; the sequence is GADR. Aspartate 117 serves as the catalytic Proton acceptor. Residue aspartate 137 participates in K(+) binding. Position 140 (threonine 140) interacts with ATP. Position 192 (threonine 192) interacts with substrate.

It belongs to the type III pantothenate kinase family. As to quaternary structure, homodimer. NH4(+) serves as cofactor. K(+) is required as a cofactor.

Its subcellular location is the cytoplasm. It catalyses the reaction (R)-pantothenate + ATP = (R)-4'-phosphopantothenate + ADP + H(+). It participates in cofactor biosynthesis; coenzyme A biosynthesis; CoA from (R)-pantothenate: step 1/5. Catalyzes the phosphorylation of pantothenate (Pan), the first step in CoA biosynthesis. The sequence is that of Type III pantothenate kinase from Dehalococcoides mccartyi (strain ATCC BAA-2100 / JCM 16839 / KCTC 5957 / BAV1).